The sequence spans 167 residues: MAHNHWCNLFSVALVCVVALVMVQYSVAQNSPQDYVDAHNAARSAVNVGPVTWDESVAAFARQYAQSRAGDCRLVHSGDPRYGENLAFGSGFELTGRNAVDMWVAERNDYNPNTNTCAPGKVCGHYTQVVWRNSVRIGCARVRCNNGAWFITCNYSPPGNYAGQRPY.

Residues 1–29 (MAHNHWCNLFSVALVCVVALVMVQYSVAQ) form the signal peptide. Residues 36–155 (VDAHNAARSA…NGAWFITCNY (120 aa)) form the SCP domain. Cystine bridges form between Cys72–Cys144, Cys117–Cys123, and Cys139–Cys153.

It belongs to the CRISP family.

Functionally, probably involved in the defense reaction of plants against pathogens. This chain is Pathogenesis-related protein PR-1 type, found in Sambucus nigra (European elder).